We begin with the raw amino-acid sequence, 257 residues long: Deoxyribose-phosphate aldolase (257 aa).

The active-site Proton donor/acceptor is the aspartate 102. Residue lysine 166 is the Schiff-base intermediate with acetaldehyde of the active site. Lysine 198 acts as the Proton donor/acceptor in catalysis.

It belongs to the DeoC/FbaB aldolase family. DeoC type 2 subfamily.

Its subcellular location is the cytoplasm. The catalysed reaction is 2-deoxy-D-ribose 5-phosphate = D-glyceraldehyde 3-phosphate + acetaldehyde. It participates in carbohydrate degradation; 2-deoxy-D-ribose 1-phosphate degradation; D-glyceraldehyde 3-phosphate and acetaldehyde from 2-deoxy-alpha-D-ribose 1-phosphate: step 2/2. In terms of biological role, catalyzes a reversible aldol reaction between acetaldehyde and D-glyceraldehyde 3-phosphate to generate 2-deoxy-D-ribose 5-phosphate. The sequence is that of Deoxyribose-phosphate aldolase from Shewanella loihica (strain ATCC BAA-1088 / PV-4).